The sequence spans 306 residues: Non-structural protein 3 (306 aa).

The chain is Non-structural protein 3 (Segment-7) from Banna virus (BAV).